Here is an 84-residue protein sequence, read N- to C-terminus: MSKSLQLIVTVLCIFTILVLGEICLAKGQPLEEMVECKEVLWPEECKYDACAFACALKRHGKGGCLEGPDYRSACICQYACKRS.

An N-terminal signal peptide occupies residues 1–28; sequence MSKSLQLIVTVLCIFTILVLGEICLAKG. Cystine bridges form between Cys-37–Cys-81, Cys-46–Cys-65, Cys-51–Cys-75, and Cys-55–Cys-77.

It belongs to the DEFL family.

It localises to the secreted. In Arabidopsis thaliana (Mouse-ear cress), this protein is Defensin-like protein 140 (LCR15).